The following is a 345-amino-acid chain: Phosphoribosylformylglycinamidine cyclo-ligase (345 aa).

Belongs to the AIR synthase family.

It localises to the cytoplasm. The catalysed reaction is 2-formamido-N(1)-(5-O-phospho-beta-D-ribosyl)acetamidine + ATP = 5-amino-1-(5-phospho-beta-D-ribosyl)imidazole + ADP + phosphate + H(+). It functions in the pathway purine metabolism; IMP biosynthesis via de novo pathway; 5-amino-1-(5-phospho-D-ribosyl)imidazole from N(2)-formyl-N(1)-(5-phospho-D-ribosyl)glycinamide: step 2/2. The polypeptide is Phosphoribosylformylglycinamidine cyclo-ligase (Shewanella baltica (strain OS223)).